A 98-amino-acid chain; its full sequence is NADH-ubiquinone oxidoreductase chain 4L (98 aa).

3 helical membrane passes run 1–21, 29–49, and 61–81; these read MPPI…GLLM, SLLC…ILSL, and IILL…LVMI.

This sequence belongs to the complex I subunit 4L family. Core subunit of respiratory chain NADH dehydrogenase (Complex I) which is composed of 45 different subunits.

The protein resides in the mitochondrion inner membrane. It carries out the reaction a ubiquinone + NADH + 5 H(+)(in) = a ubiquinol + NAD(+) + 4 H(+)(out). Functionally, core subunit of the mitochondrial membrane respiratory chain NADH dehydrogenase (Complex I) which catalyzes electron transfer from NADH through the respiratory chain, using ubiquinone as an electron acceptor. Part of the enzyme membrane arm which is embedded in the lipid bilayer and involved in proton translocation. The chain is NADH-ubiquinone oxidoreductase chain 4L (MT-ND4L) from Galeopterus variegatus (Malayan flying lemur).